Reading from the N-terminus, the 412-residue chain is Proline-rich protein 30 (412 aa).

Composition is skewed to polar residues over residues 1–15 (MLPQNKDQVLPQTSV) and 23–39 (GFSQLVDSSPHNLQPLS). Disordered regions lie at residues 1 to 88 (MLPQ…HPYS), 123 to 174 (PLTP…SNRQ), and 317 to 412 (RPKE…KSSV). Composition is skewed to low complexity over residues 50 to 59 (PFSSTQSRRP), 126 to 142 (PSFSPSQPQNSSLPHSP), and 334 to 350 (QLPASQPPAAQARADPV). Positions 353-372 (TPSQTRSFRSAGLQSPNSPR) are enriched in polar residues.

This chain is Proline-rich protein 30 (PRR30), found in Homo sapiens (Human).